The following is a 135-amino-acid chain: Interleukin-4 (135 aa).

The N-terminal stretch at 1 to 24 (MGLTYQLIPVLVCLLVCTSHFAHG) is a signal peptide. 3 cysteine pairs are disulfide-bonded: C27/C135, C48/C85, and C70/C105. A glycan (N-linked (GlcNAc...) asparagine) is linked at N62.

Belongs to the IL-4/IL-13 family.

The protein resides in the secreted. Functionally, participates in at least several B-cell activation processes as well as of other cell types. It is a costimulator of DNA-synthesis. It induces the expression of class II MHC molecules on resting B-cells. It enhances both secretion and cell surface expression of IgE and IgG1. It also regulates the expression of the low affinity Fc receptor for IgE (CD23) on both lymphocytes and monocytes. Positively regulates IL31RA expression in macrophages. Stimulates autophagy in dendritic cells by interfering with mTORC1 signaling and through the induction of RUFY4. The chain is Interleukin-4 (IL4) from Boselaphus tragocamelus (Nilgai).